The primary structure comprises 130 residues: Large ribosomal subunit protein bL12 (130 aa).

The protein belongs to the bacterial ribosomal protein bL12 family. As to quaternary structure, homodimer. Part of the ribosomal stalk of the 50S ribosomal subunit. Forms a multimeric L10(L12)X complex, where L10 forms an elongated spine to which 2 to 4 L12 dimers bind in a sequential fashion. Binds GTP-bound translation factors.

Forms part of the ribosomal stalk which helps the ribosome interact with GTP-bound translation factors. Is thus essential for accurate translation. This Synechococcus sp. (strain RCC307) protein is Large ribosomal subunit protein bL12.